Reading from the N-terminus, the 480-residue chain is Siroheme synthase (480 aa).

The precorrin-2 dehydrogenase /sirohydrochlorin ferrochelatase stretch occupies residues 1–203 (MNYFPIFANL…QQTAQAEQEL (203 aa)). NAD(+) is bound by residues 22 to 23 (SV) and 43 to 44 (NQ). Residue serine 128 is modified to Phosphoserine. Positions 214–480 (GFVSLVGAGP…GGLNAGQRAA (267 aa)) are uroporphyrinogen-III C-methyltransferase. Proline 223 is an S-adenosyl-L-methionine binding site. The Proton acceptor role is filled by aspartate 246. Lysine 268 functions as the Proton donor in the catalytic mechanism. S-adenosyl-L-methionine is bound by residues 299-301 (GGD), valine 304, 329-330 (TA), methionine 381, and glycine 410.

In the N-terminal section; belongs to the precorrin-2 dehydrogenase / sirohydrochlorin ferrochelatase family. The protein in the C-terminal section; belongs to the precorrin methyltransferase family.

It catalyses the reaction uroporphyrinogen III + 2 S-adenosyl-L-methionine = precorrin-2 + 2 S-adenosyl-L-homocysteine + H(+). The catalysed reaction is precorrin-2 + NAD(+) = sirohydrochlorin + NADH + 2 H(+). It carries out the reaction siroheme + 2 H(+) = sirohydrochlorin + Fe(2+). Its pathway is cofactor biosynthesis; adenosylcobalamin biosynthesis; precorrin-2 from uroporphyrinogen III: step 1/1. It functions in the pathway cofactor biosynthesis; adenosylcobalamin biosynthesis; sirohydrochlorin from precorrin-2: step 1/1. It participates in porphyrin-containing compound metabolism; siroheme biosynthesis; precorrin-2 from uroporphyrinogen III: step 1/1. The protein operates within porphyrin-containing compound metabolism; siroheme biosynthesis; siroheme from sirohydrochlorin: step 1/1. Its pathway is porphyrin-containing compound metabolism; siroheme biosynthesis; sirohydrochlorin from precorrin-2: step 1/1. In terms of biological role, multifunctional enzyme that catalyzes the SAM-dependent methylations of uroporphyrinogen III at position C-2 and C-7 to form precorrin-2 via precorrin-1. Then it catalyzes the NAD-dependent ring dehydrogenation of precorrin-2 to yield sirohydrochlorin. Finally, it catalyzes the ferrochelation of sirohydrochlorin to yield siroheme. The polypeptide is Siroheme synthase (Neisseria meningitidis serogroup C (strain 053442)).